We begin with the raw amino-acid sequence, 259 residues long: Oxidase ustYb (259 aa).

Residues 36-56 (IIYTSLAFVGFIEILFFGIFF) form a helical membrane-spanning segment. N-linked (GlcNAc...) asparagine glycosylation is found at Asn102 and Asn122. 2 consecutive short sequence motifs (HXXHC) follow at residues 147-151 (HQLHC) and 197-201 (HVDHC).

This sequence belongs to the ustYa family.

It is found in the membrane. It functions in the pathway mycotoxin biosynthesis. Its function is as follows. Oxidase; part of the gene cluster that mediates the biosynthesis of the secondary metabolite ustiloxin B, an antimitotic tetrapeptide. First, ustA is processed by the subtilisin-like endoprotease Kex2 that is outside the ustiloxin B gene cluster, at the C-terminal side of Arg-Lys, after transfer to Golgi apparatus through the endoplasmic reticulum (ER). Cleavage by KEX2 generates 16 peptides YAIG-I to YAIG-XVI. To process the precursor peptide further, at least two peptidases are necessary to cleave the N-terminal and C-terminal sides of the Tyr-Ala-Ile-Gly core peptide which serves as backbone for the synthesis of ustiloxin B, through cyclization and modification of the tyrosine with a non-protein coding amino acid, norvaline. One of the two peptidases must be the serine peptidase ustP; and the other pepdidase is probably ustH. Macrocyclization of the core peptide derived from ustA requires the tyrosinase ustQ, as well as the homologous oxidases ustYa and ustYb, and leads to the production of the first cyclization product N-desmethylustiloxin F. For the formation of N-desmethylustiloxin F, three oxidation steps are required, hydroxylation at the benzylic position, hydroxylation at either the aromatic ring of Tyr or beta-position of Ile, and oxidative cyclization. UstQ may catalyze the oxidation of a phenol moiety, whereas the ustYa and ustYb are most likely responsible for the remaining two-step oxidations. N-desmethylustiloxin F is then methylated by ustM to yield ustiloxin F which in turn substrate of the cytochrome P450 monooxygenase ustC which catalyzes the formation of S-deoxyustiloxin H. The flavoprotein monooxygenases ustF1 and ustF2 then participate in the modification of the side chain of S-deoxyustiloxin H, leading to the synthesis of an oxime intermediate, via ustiloxin H. Finally, carboxylative dehydration performed by the cysteine desulfurase-like protein ustD yields ustiloxin B. This Aspergillus flavus (strain ATCC 200026 / FGSC A1120 / IAM 13836 / NRRL 3357 / JCM 12722 / SRRC 167) protein is Oxidase ustYb.